A 1058-amino-acid chain; its full sequence is Carbamoyl phosphate synthase large chain (1058 aa).

A carboxyphosphate synthetic domain region spans residues 1–401; the sequence is MPKRTDIQKI…SLLKACRSLE (401 aa). Residues Arg129, Arg169, Gly175, Gly176, Arg208, Ile210, Glu215, Gly241, Ile242, His243, Gln284, and Glu298 each coordinate ATP. The ATP-grasp 1 domain occupies 133–327; it reads KQLMEELEQP…IAKLAAKIAV (195 aa). Mg(2+)-binding residues include Gln284, Glu298, and Asn300. Mn(2+) is bound by residues Gln284, Glu298, and Asn300. The segment at 402–546 is oligomerization domain; it reads IGVHHNEIPE…YSTYGWENES (145 aa). The interval 547 to 929 is carbamoyl phosphate synthetic domain; sequence IKSDKESVLV…ALYKAFEASY (383 aa). The region spanning 671 to 861 is the ATP-grasp 2 domain; the sequence is EQALKELDIP…MAQVATKLIL (191 aa). ATP is bound by residues Arg707, Ser746, Ile748, Glu752, Gly777, Val778, His779, Ser780, Gln820, and Glu832. Residues Gln820, Glu832, and Asn834 each coordinate Mg(2+). Positions 820, 832, and 834 each coordinate Mn(2+). An MGS-like domain is found at 930–1058; the sequence is LHLPTFGNVV…ESRSFVTEAI (129 aa). The allosteric domain stretch occupies residues 930 to 1058; that stretch reads LHLPTFGNVV…ESRSFVTEAI (129 aa).

This sequence belongs to the CarB family. Composed of two chains; the small (or glutamine) chain promotes the hydrolysis of glutamine to ammonia, which is used by the large (or ammonia) chain to synthesize carbamoyl phosphate. Tetramer of heterodimers (alpha,beta)4. It depends on Mg(2+) as a cofactor. Requires Mn(2+) as cofactor.

It catalyses the reaction hydrogencarbonate + L-glutamine + 2 ATP + H2O = carbamoyl phosphate + L-glutamate + 2 ADP + phosphate + 2 H(+). The enzyme catalyses hydrogencarbonate + NH4(+) + 2 ATP = carbamoyl phosphate + 2 ADP + phosphate + 2 H(+). The protein operates within amino-acid biosynthesis; L-arginine biosynthesis; carbamoyl phosphate from bicarbonate: step 1/1. It participates in pyrimidine metabolism; UMP biosynthesis via de novo pathway; (S)-dihydroorotate from bicarbonate: step 1/3. Its function is as follows. Large subunit of the glutamine-dependent carbamoyl phosphate synthetase (CPSase). CPSase catalyzes the formation of carbamoyl phosphate from the ammonia moiety of glutamine, carbonate, and phosphate donated by ATP, constituting the first step of 2 biosynthetic pathways, one leading to arginine and/or urea and the other to pyrimidine nucleotides. The large subunit (synthetase) binds the substrates ammonia (free or transferred from glutamine from the small subunit), hydrogencarbonate and ATP and carries out an ATP-coupled ligase reaction, activating hydrogencarbonate by forming carboxy phosphate which reacts with ammonia to form carbamoyl phosphate. The polypeptide is Carbamoyl phosphate synthase large chain (Streptococcus pneumoniae (strain ATCC 700669 / Spain 23F-1)).